Consider the following 135-residue polypeptide: MARILALDYGTKRTGVAVTDELKMIASGLTTVQTPELIKFLEDYFKNEKVERVLVGEPKRMDDTPSQSEVHIQEFLKEFVKKFPEMPMERVDERFTSKMAVQSMIDGGLKKKKRRDKALVDEISATIILQTWLYE.

The protein belongs to the YqgF nuclease family.

The protein localises to the cytoplasm. Its function is as follows. Could be a nuclease involved in processing of the 5'-end of pre-16S rRNA. This is Putative pre-16S rRNA nuclease from Christiangramia forsetii (strain DSM 17595 / CGMCC 1.15422 / KT0803) (Gramella forsetii).